A 335-amino-acid chain; its full sequence is Auxin-responsive protein IAA6 (335 aa).

The EAR-like (transcriptional repression) motif lies at 51-55 (LKLGL). Disordered regions lie at residues 81–102 (LSFF…GAKR), 143–180 (KKGC…VGWP), and 188–207 (NLAS…DNAN). Residues 217 to 321 (NPLVKINMDG…TAKRLRVLRS (105 aa)) form the PB1 domain.

The protein belongs to the Aux/IAA family. In terms of assembly, homodimers and heterodimers. In terms of tissue distribution, highly expressed in roots. Expressed in shoots and flowers.

The protein resides in the nucleus. Its function is as follows. Aux/IAA proteins are short-lived transcriptional factors that function as repressors of early auxin response genes at low auxin concentrations. In Oryza sativa subsp. japonica (Rice), this protein is Auxin-responsive protein IAA6 (IAA6).